Consider the following 267-residue polypeptide: Inositol-1-monophosphatase (267 aa).

Residues Glu66, Asp84, Leu86, and Asp87 each contribute to the Mg(2+) site. Glu66 is a binding site for substrate. Residues 86-89 (LDGS), Arg182, and Asp213 contribute to the substrate site. Residue Asp213 coordinates Mg(2+).

This sequence belongs to the inositol monophosphatase superfamily. It depends on Mg(2+) as a cofactor.

The enzyme catalyses a myo-inositol phosphate + H2O = myo-inositol + phosphate. The chain is Inositol-1-monophosphatase (suhB) from Aeropyrum pernix (strain ATCC 700893 / DSM 11879 / JCM 9820 / NBRC 100138 / K1).